The following is a 334-amino-acid chain: Ornithine carbamoyltransferase (334 aa).

Carbamoyl phosphate-binding positions include 56-59 (STRT), Q83, R107, and 134-137 (HPTQ). Residues N168, D232, and 236–237 (SM) each bind L-ornithine. Carbamoyl phosphate-binding positions include 274–275 (CL) and R320.

The protein belongs to the aspartate/ornithine carbamoyltransferase superfamily. OTCase family.

It is found in the cytoplasm. It carries out the reaction carbamoyl phosphate + L-ornithine = L-citrulline + phosphate + H(+). It participates in amino-acid biosynthesis; L-arginine biosynthesis; L-arginine from L-ornithine and carbamoyl phosphate: step 1/3. Reversibly catalyzes the transfer of the carbamoyl group from carbamoyl phosphate (CP) to the N(epsilon) atom of ornithine (ORN) to produce L-citrulline. The polypeptide is Ornithine carbamoyltransferase (Shigella boydii serotype 4 (strain Sb227)).